A 370-amino-acid polypeptide reads, in one-letter code: Glutamate 5-kinase (370 aa).

Lys13 contacts ATP. Ser54, Asp140, and Asn152 together coordinate substrate. ATP-binding positions include 172–173 (SD) and 214–220 (SGGMVTK). Positions 278–355 (TGTLVLDAGA…GEIEAILGFR (78 aa)) constitute a PUA domain.

The protein belongs to the glutamate 5-kinase family.

The protein localises to the cytoplasm. The enzyme catalyses L-glutamate + ATP = L-glutamyl 5-phosphate + ADP. It functions in the pathway amino-acid biosynthesis; L-proline biosynthesis; L-glutamate 5-semialdehyde from L-glutamate: step 1/2. In terms of biological role, catalyzes the transfer of a phosphate group to glutamate to form L-glutamate 5-phosphate. The polypeptide is Glutamate 5-kinase (Paramagnetospirillum magneticum (strain ATCC 700264 / AMB-1) (Magnetospirillum magneticum)).